The primary structure comprises 310 residues: Mitochondrial citrate transporter F (310 aa).

Solcar repeat units lie at residues 23–108 (KKVH…LKNH), 115–207 (PPGL…FKRL), and 216–303 (DNMG…HKKL). 6 helical membrane passes run 29–49 (FWFG…LDLV), 85–105 (SAAI…YEEL), 122–142 (IGMA…ADVL), 186–206 (NSTR…TFKR), 222–242 (FTAS…VDVI), and 275–296 (AFRG…TFIF).

The protein belongs to the mitochondrial carrier (TC 2.A.29) family.

Its subcellular location is the mitochondrion inner membrane. Mitochondrial transporter that does not mediate citrate export from mitochondria to cytoplasm. Its exact function has still to be determined. The protein is Mitochondrial citrate transporter F of Aspergillus niger (strain ATCC 1015 / CBS 113.46 / FGSC A1144 / LSHB Ac4 / NCTC 3858a / NRRL 328 / USDA 3528.7).